A 172-amino-acid chain; its full sequence is S-ribosylhomocysteine lyase (172 aa).

Histidine 54, histidine 58, and cysteine 128 together coordinate Fe cation.

Belongs to the LuxS family. In terms of assembly, homodimer. It depends on Fe cation as a cofactor.

The catalysed reaction is S-(5-deoxy-D-ribos-5-yl)-L-homocysteine = (S)-4,5-dihydroxypentane-2,3-dione + L-homocysteine. Involved in the synthesis of autoinducer 2 (AI-2) which is secreted by bacteria and is used to communicate both the cell density and the metabolic potential of the environment. The regulation of gene expression in response to changes in cell density is called quorum sensing. Catalyzes the transformation of S-ribosylhomocysteine (RHC) to homocysteine (HC) and 4,5-dihydroxy-2,3-pentadione (DPD). This Photobacterium profundum (strain SS9) protein is S-ribosylhomocysteine lyase.